Here is a 114-residue protein sequence, read N- to C-terminus: U10-agatoxin-Ao1a (114 aa).

The N-terminal stretch at 1–15 is a signal peptide; sequence MCVATCLCTFAYVLA. The propeptide occupies 16 to 32; sequence KSDEGENLISKVEETQR. 5 disulfide bridges follow: Cys34–Cys53, Cys41–Cys59, Cys50–Cys86, Cys52–Cys76, and Cys61–Cys74. The interval 95–114 is disordered; it reads GSQNPSLCKDPNPRRRRHGK.

Belongs to the neurotoxin 04 (omega-agtx) family. 03 (type II/III omega-agtx) subfamily. In terms of tissue distribution, expressed by the venom gland.

The protein resides in the secreted. In terms of biological role, inhibits voltage-gated calcium channels (Cav). The chain is U10-agatoxin-Ao1a from Agelena orientalis (Funnel-web spider).